We begin with the raw amino-acid sequence, 201 residues long: Adenylyl-sulfate kinase (201 aa).

The segment at 1-23 (MALHDENVVWHSHPVTPQQREQH) is disordered. 35 to 42 (GLSGSGKS) contacts ATP. Residue Ser-109 is the Phosphoserine intermediate of the active site.

Belongs to the APS kinase family.

It carries out the reaction adenosine 5'-phosphosulfate + ATP = 3'-phosphoadenylyl sulfate + ADP + H(+). It functions in the pathway sulfur metabolism; hydrogen sulfide biosynthesis; sulfite from sulfate: step 2/3. Functionally, catalyzes the synthesis of activated sulfate. This Escherichia coli O6:K15:H31 (strain 536 / UPEC) protein is Adenylyl-sulfate kinase.